Here is a 76-residue protein sequence, read N- to C-terminus: Conotoxin VnMSGL-0112 (76 aa).

The first 20 residues, 1–20, serve as a signal peptide directing secretion; sequence MSGLGIMVLTLLLLVSMATS. The propeptide occupies 21 to 45; sequence HQDGRGKQATQRDAINVRRRRSITR. Intrachain disulfides connect Cys49-Cys61, Cys53-Cys70, and Cys60-Cys74.

It belongs to the conotoxin O3 superfamily. As to expression, expressed by the venom duct.

The protein localises to the secreted. The protein is Conotoxin VnMSGL-0112 of Conus ventricosus (Mediterranean cone).